The following is a 240-amino-acid chain: Acyl-protein thioesterase 1 (240 aa).

Catalysis depends on charge relay system residues Ser-129, Asp-183, and His-219.

Belongs to the AB hydrolase superfamily. AB hydrolase 2 family.

The protein resides in the cytoplasm. It is found in the nucleus. The catalysed reaction is S-hexadecanoyl-L-cysteinyl-[protein] + H2O = L-cysteinyl-[protein] + hexadecanoate + H(+). Its function is as follows. Hydrolyzes fatty acids from S-acylated cysteine residues in proteins with a strong preference for palmitoylated G-alpha proteins over other acyl substrates. Mediates the deacylation of G-alpha proteins such as GPA1 in vivo, but has weak or no activity toward palmitoylated Ras proteins. Has weak lysophospholipase activity in vitro; however such activity may not exist in vivo. The chain is Acyl-protein thioesterase 1 from Mycosarcoma maydis (Corn smut fungus).